The primary structure comprises 424 residues: MKKLLFAIPLVVPFYSHSAETVESCLAKPHTENSFTNVWKDDKTLDRYANYEGCLWNATGVVVCTGDETQCYGTWVPIGLAIPENEGGGSEGGGSEGGGSEGGGTKPPEYGDTPIPGYTYINPLDGTYPPGTEQNPANPNPSLEESQPLNTFMFQNNRFRNRQGALTVYTGTVTQGTDPVKTYYQYTPVSSKAMYDAYWNGKFRDCAFHSGFNEDPFVCEYQGQSSDLPQPPVNAGGGSGGGSGGGSEGGGSEGGGSEGGGSEGGGSGGGSGSGDFDYEKMANANKGAMTENADENALQSDAKGKLDSVATDYGAAIDGFIGDVSGLANGNGATGDFAGSNSQMAQVGDGDNSPLMNNFRQYLPSLPQSVECRPFVFGAGKPYEFSIDCDKINLFRGVFAFLLYVATFMYVFSTFANILRNKES.

Positions Met1 to Ser18 are cleaved as a signal peptide. Residues Ala19–Asn85 are N1. Cystine bridges form between Cys25/Cys54 and Cys64/Cys71. The interval Pro83–Gln147 is disordered. Residues Glu86–Gly104 are G1 (Gly-rich linker). The segment covering Glu86–Thr105 has biased composition (gly residues). Positions Thr105–Pro141 are hinge. Residues Thr132–Gln147 are compositionally biased toward polar residues. Residues Ser142–Leu228 are N2. Cys206 and Cys219 are disulfide-bonded. The segment at Gln222–Glu279 is disordered. The span at Ala235–Ser273 shows a compositional bias: gly residues. Positions Gly236–Gly274 are G2 (Gly-rich linker). The not essential for gene 3 function stretch occupies residues Glu253 to Ser262. Residues Asp275–Ser424 form a CT region. The helical transmembrane segment at Val398–Ile418 threads the bilayer.

This sequence belongs to the inovirus G3P protein family. As to quaternary structure, interacts with G6P; this interaction is required for proper integration of G3P and G6P into the virion. Interacts with G8P. Interacts with the tip of the host pilus. Interacts (via N-terminus) with host TolA. Interacts (via transmembrane domain) with host TolQ (via 2nd and 3rd transmembrane domains); this interaction allows the phage translocation across the host inner membrane. Interacts (via transmembrane domain) with host TolR (via transmembrane domain); this interaction allows the phage translocation across the host inner membrane.

The protein localises to the virion. It localises to the host membrane. Its function is as follows. Plays essential roles both in the penetration of the viral genome into the bacterial host via pilus retraction and in the extrusion process. During the initial step of infection, G3P mediates adsorption of the phage to its primary receptor, the tip of host F-pilus. Attachment of the phage causes pilus retraction bringing the viral particle into close proximity of the host cell inner membrane. Binding to the host pilus initiates a change in the G3P conformation, allowing subsequent interaction with the host entry receptors tolA, TolQ and TolR and penetration of the viral DNA into the host cytoplasm. In the extrusion process, G3P mediates the release of the membrane-anchored virion from the cell via its C-terminal domain. The chain is Attachment protein G3P (III) from Enterobacteria phage f1 (Bacteriophage f1).